Consider the following 200-residue polypeptide: Peptidyl-tRNA hydrolase (200 aa).

Tyrosine 23 contributes to the tRNA binding site. Histidine 28 (proton acceptor) is an active-site residue. TRNA-binding residues include phenylalanine 79, asparagine 81, and asparagine 127.

The protein belongs to the PTH family. In terms of assembly, monomer.

It localises to the cytoplasm. The enzyme catalyses an N-acyl-L-alpha-aminoacyl-tRNA + H2O = an N-acyl-L-amino acid + a tRNA + H(+). Its function is as follows. Hydrolyzes ribosome-free peptidyl-tRNAs (with 1 or more amino acids incorporated), which drop off the ribosome during protein synthesis, or as a result of ribosome stalling. Catalyzes the release of premature peptidyl moieties from peptidyl-tRNA molecules trapped in stalled 50S ribosomal subunits, and thus maintains levels of free tRNAs and 50S ribosomes. The chain is Peptidyl-tRNA hydrolase from Streptomyces coelicolor (strain ATCC BAA-471 / A3(2) / M145).